We begin with the raw amino-acid sequence, 194 residues long: Thymidine kinase (194 aa).

Residues 15 to 22 (GSMFSGKS) and 88 to 91 (DEVQ) contribute to the ATP site. Glutamate 89 acts as the Proton acceptor in catalysis. Zn(2+) is bound by residues cysteine 145, cysteine 148, cysteine 183, and cysteine 186.

The protein belongs to the thymidine kinase family. As to quaternary structure, homotetramer.

The protein localises to the cytoplasm. The enzyme catalyses thymidine + ATP = dTMP + ADP + H(+). In Bacillus cereus (strain AH820), this protein is Thymidine kinase.